The sequence spans 386 residues: MKLNPSLLTAAGLVSAQLASALPQASSSTVSPSPSPSATPGSFVTTSGLNFVIDGKTGYFAGSNSYWIGFQKNNDDVDLVFSHLQESGLKILRVWGFNDVNQKPTDGSVYYHLLADGTATVNEGEDGLQRLDYVVSSAEKHGIKLIINFVNFWDDYGGINAYVKAFGGSKEGFYTNDAMQAAYRAYIKAVISRYSDSTAIFAWELANEPRCQGCETTVLYNWIESTSQYIKSLDSKHLVCIGDEGFGLDTGSDGSYPYQYSEGSDFAKNLAIPTIDFGTFHLYPSSWGTTNDWGNGWVTSHGAACKAAGKPCLFEEYGVTSDHCAVEKPWQNTALNTTAISGDLYWQYGDQLSGGPSPDDGNTFYYGTDDFKCLVTDHIAAINSRK.

Positions 1–21 (MKLNPSLLTAAGLVSAQLASA) are cleaved as a signal peptide. Trp-95 and Asn-207 together coordinate substrate. Catalysis depends on Glu-208, which acts as the Proton donor. Tyr-283 contributes to the substrate binding site. Glu-316 functions as the Nucleophile in the catalytic mechanism. A glycan (N-linked (GlcNAc...) asparagine) is linked at Asn-336. Substrate is bound at residue Trp-346.

This sequence belongs to the glycosyl hydrolase 5 (cellulase A) family.

It localises to the secreted. It catalyses the reaction Random hydrolysis of (1-&gt;4)-beta-D-mannosidic linkages in mannans, galactomannans and glucomannans.. Its function is as follows. Endo-1,4-mannanase, a crucial enzyme for depolymerization of seed galactomannans and wood galactoglucomannans. This Aspergillus oryzae (strain ATCC 42149 / RIB 40) (Yellow koji mold) protein is Probable mannan endo-1,4-beta-mannosidase A (manA).